A 122-amino-acid polypeptide reads, in one-letter code: Sperm-egg fusion protein LLCFC1 (122 aa).

A signal peptide spans 1-28; that stretch reads MPPLAPQLCRAVFLVPILLLLQVKPLNG. The segment at 27–51 is disordered; sequence NGSPGPKDGSQTEKTPSADQNQEQF. A compositionally biased stretch (polar residues) spans 38–49; it reads TEKTPSADQNQE.

The protein localises to the secreted. In terms of biological role, sperm protein required for fusion of sperm with the egg membrane during fertilization. The polypeptide is Sperm-egg fusion protein LLCFC1 (Homo sapiens (Human)).